The following is a 431-amino-acid chain: Histidinol dehydrogenase (431 aa).

The NAD(+) site is built by Y127, Q189, and N212. Residues S237, Q259, and H262 each contribute to the substrate site. Residues Q259 and H262 each coordinate Zn(2+). Catalysis depends on proton acceptor residues E326 and H327. Substrate-binding residues include H327, D360, E414, and H419. D360 contributes to the Zn(2+) binding site. H419 contributes to the Zn(2+) binding site.

This sequence belongs to the histidinol dehydrogenase family. It depends on Zn(2+) as a cofactor.

It carries out the reaction L-histidinol + 2 NAD(+) + H2O = L-histidine + 2 NADH + 3 H(+). The protein operates within amino-acid biosynthesis; L-histidine biosynthesis; L-histidine from 5-phospho-alpha-D-ribose 1-diphosphate: step 9/9. Its function is as follows. Catalyzes the sequential NAD-dependent oxidations of L-histidinol to L-histidinaldehyde and then to L-histidine. The sequence is that of Histidinol dehydrogenase from Xanthomonas campestris pv. campestris (strain 8004).